The sequence spans 127 residues: MALKACITVIAVVYVVQVVRGAEKSLDSDSSGEDYELWTQGCPFLVAENRTGFGTTVSCQHNCNGAIEKVPEGEPCYTIGEDGLGRMKLNLPYNCSLGECSGGVCVPNGRSDVCFKRTWEENNKAMA.

Positions 1-21 are cleaved as a signal peptide; the sequence is MALKACITVIAVVYVVQVVRG. 4 disulfide bridges follow: Cys-42-Cys-63, Cys-59-Cys-100, Cys-76-Cys-105, and Cys-95-Cys-114. Residues Asn-49 and Asn-94 are each glycosylated (N-linked (GlcNAc...) asparagine).

The protein resides in the secreted. In terms of biological role, salivary chemokine-binding protein which binds to host chemokines CCL1, CCL2, CCL3 and CCL5. This chain is Evasin P467, found in Rhipicephalus pulchellus (Yellow backed tick).